The following is an 80-amino-acid chain: MTTNKNLDENISFEEALSELEEIVKKIDNGQETLEAAVNSFERGILLKNHCEKKLKEARLKIEKITKLADSTITLEEVEV.

This sequence belongs to the XseB family. In terms of assembly, heterooligomer composed of large and small subunits.

The protein resides in the cytoplasm. The enzyme catalyses Exonucleolytic cleavage in either 5'- to 3'- or 3'- to 5'-direction to yield nucleoside 5'-phosphates.. In terms of biological role, bidirectionally degrades single-stranded DNA into large acid-insoluble oligonucleotides, which are then degraded further into small acid-soluble oligonucleotides. This chain is Exodeoxyribonuclease 7 small subunit, found in Rickettsia bellii (strain OSU 85-389).